A 64-amino-acid polypeptide reads, in one-letter code: Lantipeptide Flvbeta.d (64 aa).

A propeptide spans 1–31 (MDNNTEKFNELAAIADESELNEMLDENITGA) (cleaved by FlvT). The lanthionine (Ser-Cys); by FlvM2 cross-link spans 33–37 (STIQC). Residues Thr-34 and Thr-41 each carry the 2,3-didehydrobutyrine; by FlvM2 modification. 3 consecutive cross-links (beta-methyllanthionine (Thr-Cys); by FlvM2) follow at residues 44–52 (TILSVVFDC), 55–58 (TSAC), and 59–62 (TPPC). A cross-link (lanthionine (Ser-Cys); by FlvM2) is located at residues 47-53 (SVVFDCC).

Post-translationally, contains LL-lanthionine, DL-lanthionine, and DL-beta-methyllanthionine, when coepressed in E.coli with the flavecin synthetase FlvM2.

Its subcellular location is the secreted. Its function is as follows. Lanthionine-containing peptide that does probably not show antibacterial activity, since its analog [+2]Flvbeta.d does not show antibacterial activity against M.luteus. Also does not show antibiotic activity when tested with [Del2]Flvalpha.a, an analog of Flvalpha.a, which is encoded by the same operon than Flvbeta.d. The bactericidal activity of lantibiotics is based on depolarization of energized bacterial cytoplasmic membranes, initiated by the formation of aqueous transmembrane pores. This Ruminococcus flavefaciens protein is Lantipeptide Flvbeta.d.